A 62-amino-acid chain; its full sequence is Large ribosomal subunit protein uL30 (62 aa).

It belongs to the universal ribosomal protein uL30 family. In terms of assembly, part of the 50S ribosomal subunit.

This Roseobacter denitrificans (strain ATCC 33942 / OCh 114) (Erythrobacter sp. (strain OCh 114)) protein is Large ribosomal subunit protein uL30.